We begin with the raw amino-acid sequence, 686 residues long: Methionine--tRNA ligase (686 aa).

A 'HIGH' region motif is present at residues P15–H25. Positions 146, 149, 159, and 162 each coordinate Zn(2+). Positions K332–S336 match the 'KMSKS' region motif. K335 serves as a coordination point for ATP. Residues T585–M686 form the tRNA-binding domain.

The protein belongs to the class-I aminoacyl-tRNA synthetase family. MetG type 1 subfamily. In terms of assembly, homodimer. Requires Zn(2+) as cofactor.

It localises to the cytoplasm. It catalyses the reaction tRNA(Met) + L-methionine + ATP = L-methionyl-tRNA(Met) + AMP + diphosphate. Its function is as follows. Is required not only for elongation of protein synthesis but also for the initiation of all mRNA translation through initiator tRNA(fMet) aminoacylation. This Psychromonas ingrahamii (strain DSM 17664 / CCUG 51855 / 37) protein is Methionine--tRNA ligase.